The chain runs to 310 residues: Tyrosine recombinase XerC (310 aa).

The region spanning 11–97 is the Core-binding (CB) domain; it reads NSLQKPLSRF…SLRSFFDFLV (87 aa). The Tyr recombinase domain occupies 118 to 298; it reads PLPKNLDVDE…DFQHLAQAYD (181 aa). Residues arginine 157, lysine 181, histidine 250, arginine 253, and histidine 276 contribute to the active site. Tyrosine 285 (O-(3'-phospho-DNA)-tyrosine intermediate) is an active-site residue.

This sequence belongs to the 'phage' integrase family. XerC subfamily. In terms of assembly, forms a cyclic heterotetrameric complex composed of two molecules of XerC and two molecules of XerD.

It localises to the cytoplasm. Functionally, site-specific tyrosine recombinase, which acts by catalyzing the cutting and rejoining of the recombining DNA molecules. The XerC-XerD complex is essential to convert dimers of the bacterial chromosome into monomers to permit their segregation at cell division. It also contributes to the segregational stability of plasmids. In Vibrio atlanticus (strain LGP32) (Vibrio splendidus (strain Mel32)), this protein is Tyrosine recombinase XerC.